A 392-amino-acid chain; its full sequence is tRNA (guanine-N(7)-)-methyltransferase (392 aa).

Residues Glu123, Glu148, and Asp175 each contribute to the S-adenosyl-L-methionine site. Substrate contacts are provided by Lys201 and Asp231.

This sequence belongs to the class I-like SAM-binding methyltransferase superfamily. TrmB family.

It catalyses the reaction guanosine(46) in tRNA + S-adenosyl-L-methionine = N(7)-methylguanosine(46) in tRNA + S-adenosyl-L-homocysteine. It functions in the pathway tRNA modification; N(7)-methylguanine-tRNA biosynthesis. In terms of biological role, catalyzes the formation of N(7)-methylguanine at position 46 (m7G46) in tRNA. The protein is tRNA (guanine-N(7)-)-methyltransferase of Campylobacter jejuni subsp. jejuni serotype O:2 (strain ATCC 700819 / NCTC 11168).